The sequence spans 229 residues: Large ribosomal subunit protein uL1 (229 aa).

The protein belongs to the universal ribosomal protein uL1 family. Part of the 50S ribosomal subunit.

Binds directly to 23S rRNA. The L1 stalk is quite mobile in the ribosome, and is involved in E site tRNA release. Its function is as follows. Protein L1 is also a translational repressor protein, it controls the translation of the L11 operon by binding to its mRNA. This Listeria innocua serovar 6a (strain ATCC BAA-680 / CLIP 11262) protein is Large ribosomal subunit protein uL1.